A 400-amino-acid chain; its full sequence is 1-deoxy-D-xylulose 5-phosphate reductoisomerase (400 aa).

Residues Thr17, Gly18, Ser19, Ile20, and Asn131 each contribute to the NADPH site. 1-deoxy-D-xylulose 5-phosphate is bound at residue Lys132. Position 133 (Glu133) interacts with NADPH. Residue Asp157 participates in Mn(2+) binding. 4 residues coordinate 1-deoxy-D-xylulose 5-phosphate: Ser158, Glu159, Ser188, and His211. Glu159 lines the Mn(2+) pocket. Gly217 provides a ligand contact to NADPH. 1-deoxy-D-xylulose 5-phosphate-binding residues include Ser224, Asn229, Lys230, and Glu233. Mn(2+) is bound at residue Glu233.

Belongs to the DXR family. It depends on Mg(2+) as a cofactor. Mn(2+) is required as a cofactor.

The catalysed reaction is 2-C-methyl-D-erythritol 4-phosphate + NADP(+) = 1-deoxy-D-xylulose 5-phosphate + NADPH + H(+). Its pathway is isoprenoid biosynthesis; isopentenyl diphosphate biosynthesis via DXP pathway; isopentenyl diphosphate from 1-deoxy-D-xylulose 5-phosphate: step 1/6. Catalyzes the NADPH-dependent rearrangement and reduction of 1-deoxy-D-xylulose-5-phosphate (DXP) to 2-C-methyl-D-erythritol 4-phosphate (MEP). In Pseudomonas putida (strain ATCC 47054 / DSM 6125 / CFBP 8728 / NCIMB 11950 / KT2440), this protein is 1-deoxy-D-xylulose 5-phosphate reductoisomerase.